The sequence spans 440 residues: Chromosome partition protein MukF (440 aa).

A leucine-zipper region spans residues L208–I236.

This sequence belongs to the MukF family. Interacts, and probably forms a ternary complex, with MukE and MukB via its C-terminal region. The complex formation is stimulated by calcium or magnesium. It is required for an interaction between MukE and MukB.

It localises to the cytoplasm. Its subcellular location is the nucleoid. In terms of biological role, involved in chromosome condensation, segregation and cell cycle progression. May participate in facilitating chromosome segregation by condensation DNA from both sides of a centrally located replisome during cell division. Not required for mini-F plasmid partitioning. Probably acts via its interaction with MukB and MukE. Overexpression results in anucleate cells. It has a calcium binding activity. This chain is Chromosome partition protein MukF, found in Escherichia coli O17:K52:H18 (strain UMN026 / ExPEC).